The primary structure comprises 387 residues: 3-ketoacyl-CoA thiolase (387 aa).

Cysteine 91 functions as the Acyl-thioester intermediate in the catalytic mechanism. Catalysis depends on proton acceptor residues histidine 343 and cysteine 373.

The protein belongs to the thiolase-like superfamily. Thiolase family. As to quaternary structure, heterotetramer of two alpha chains (FadB) and two beta chains (FadA).

The protein localises to the cytoplasm. The catalysed reaction is an acyl-CoA + acetyl-CoA = a 3-oxoacyl-CoA + CoA. It participates in lipid metabolism; fatty acid beta-oxidation. Functionally, catalyzes the final step of fatty acid oxidation in which acetyl-CoA is released and the CoA ester of a fatty acid two carbons shorter is formed. The sequence is that of 3-ketoacyl-CoA thiolase from Cronobacter sakazakii (strain ATCC BAA-894) (Enterobacter sakazakii).